The sequence spans 371 residues: 4-hydroxybenzoate polyprenyltransferase, mitochondrial (371 aa).

The N-terminal 45 residues, 1-45 (MLGSCGAGLVRGLRAETQAWLWGTRGRSLALVHAARGLHAANWQP), are a transit peptide targeting the mitochondrion. The Mitochondrial matrix segment spans residues 46-83 (SPGQGPRGRPLSLSAAAVVNSAPRPLQPYLRLMRLDKP). A helical membrane pass occupies residues 84 to 104 (IGTWLLYLPCTWSIGLAADPG). Over 105-108 (CLPD) the chain is Mitochondrial intermembrane. The chain crosses the membrane as a helical span at residues 109-129 (WYMLSLFGTGAVLMRGAGCTI). Over 130–171 (NDMWDRDYDKKVTRTASRPIAAGDISTFRSFVFLGGQLTLAL) the chain is Mitochondrial matrix. The helical transmembrane segment at 172-192 (GVLLCLNYYSIALGAASLLLV) threads the bilayer. Residues 193–200 (TTYPLMKR) are Mitochondrial intermembrane-facing. A helical membrane pass occupies residues 201–221 (ITYWPQLALGLTFNWGALLGW). The Mitochondrial matrix portion of the chain corresponds to 222 to 231 (SAVKGSCDPS). Residues 232-252 (VCLPLYFSGIMWTLIYDTIYA) form a helical membrane-spanning segment. The Mitochondrial intermembrane portion of the chain corresponds to 253–277 (HQDKKDDALIGLKSTALLFREDTKK). A helical membrane pass occupies residues 278-298 (WLSGFSVAMLGALSLVGVNSG). Over 299-300 (QT) the chain is Mitochondrial matrix. The helical transmembrane segment at 301–321 (MPYYTALAAVGAHLAHQIYTL) threads the bilayer. Residues 322–332 (DINRPEDCWEK) are Mitochondrial intermembrane-facing. The helical transmembrane segment at 333–353 (FTSNRTIGLIIFLGIVLGNLC) threads the bilayer. The Mitochondrial matrix segment spans residues 354–371 (KAKETDKTRKNIENRMEN).

This sequence belongs to the UbiA prenyltransferase family. Requires Mg(2+) as cofactor.

Its subcellular location is the mitochondrion inner membrane. The catalysed reaction is an all-trans-polyprenyl diphosphate + 4-hydroxybenzoate = a 4-hydroxy-3-(all-trans-polyprenyl)benzoate + diphosphate. The enzyme catalyses all-trans-decaprenyl diphosphate + 4-hydroxybenzoate = 4-hydroxy-3-(all-trans-decaprenyl)benzoate + diphosphate. It carries out the reaction all-trans-nonaprenyl diphosphate + 4-hydroxybenzoate = 4-hydroxy-3-(all-trans-nonaprenyl)benzoate + diphosphate. It functions in the pathway cofactor biosynthesis; ubiquinone biosynthesis. In terms of biological role, mediates the second step in the final reaction sequence of coenzyme Q (CoQ) biosynthesis. Catalyzes the prenylation of para-hydroxybenzoate (PHB) with an all-trans polyprenyl donor (such as all-trans-decaprenyl diphosphate). The length of the polyprenyl side chain varies depending on the species, in humans, the side chain is comprised of 10 isoprenyls (decaprenyl) producing CoQ10 (also known as ubiquinone), whereas rodents predominantly generate CoQ9. However, this specificity is not complete, human tissues have low amounts of CoQ9 and rodent organs contain some CoQ10. Plays a central role in the biosynthesis of CoQ10. CoQ10 is a vital molecule that transports electrons from mitochondrial respiratory chain complexes. CoQs also function as cofactors for uncoupling protein and play a role as regulators of the extracellularly-induced ceramide-dependent apoptotic pathway. Regulates mitochondrial permeability transition pore (mPTP) opening and ROS production (pivotal events in cell death) in a tissue specific manner. This Bos taurus (Bovine) protein is 4-hydroxybenzoate polyprenyltransferase, mitochondrial.